The chain runs to 303 residues: Porphobilinogen deaminase (303 aa).

An S-(dipyrrolylmethanemethyl)cysteine modification is found at C240.

Belongs to the HMBS family. In terms of assembly, monomer. Dipyrromethane is required as a cofactor.

The enzyme catalyses 4 porphobilinogen + H2O = hydroxymethylbilane + 4 NH4(+). Its pathway is porphyrin-containing compound metabolism; protoporphyrin-IX biosynthesis; coproporphyrinogen-III from 5-aminolevulinate: step 2/4. Functionally, tetrapolymerization of the monopyrrole PBG into the hydroxymethylbilane pre-uroporphyrinogen in several discrete steps. The chain is Porphobilinogen deaminase from Stenotrophomonas maltophilia (strain K279a).